The following is a 375-amino-acid chain: Pectate lyase C (375 aa).

The first 22 residues, 1 to 22 (MKSLITPITAGLLLALSQPLLA), serve as a signal peptide directing secretion. C94 and C177 are joined by a disulfide. Ca(2+)-binding residues include D151, D153, E188, and D192. R240 is a catalytic residue. The cysteines at positions 351 and 374 are disulfide-linked.

This sequence belongs to the polysaccharide lyase 1 family. PLADES subfamily. The cofactor is Ca(2+).

The protein resides in the secreted. It carries out the reaction Eliminative cleavage of (1-&gt;4)-alpha-D-galacturonan to give oligosaccharides with 4-deoxy-alpha-D-galact-4-enuronosyl groups at their non-reducing ends.. It functions in the pathway glycan metabolism; pectin degradation; 2-dehydro-3-deoxy-D-gluconate from pectin: step 2/5. Functionally, involved in maceration and soft-rotting of plant tissue. The protein is Pectate lyase C of Dickeya chrysanthemi (Pectobacterium chrysanthemi).